Reading from the N-terminus, the 261-residue chain is Orotidine 5'-phosphate decarboxylase (261 aa).

Substrate is bound by residues Asp-34, 56–58, 88–97, Tyr-214, and Arg-232; these read KTH and DRKFADIGNT. Lys-90 acts as the Proton donor in catalysis.

This sequence belongs to the OMP decarboxylase family.

It carries out the reaction orotidine 5'-phosphate + H(+) = UMP + CO2. Its pathway is pyrimidine metabolism; UMP biosynthesis via de novo pathway; UMP from orotate: step 2/2. The sequence is that of Orotidine 5'-phosphate decarboxylase (URA3) from Kodamaea ohmeri (Yeast).